The sequence spans 321 residues: tRNA-dihydrouridine synthase B (321 aa).

FMN-binding positions include 16–18 and Gln70; that span reads PMA. Catalysis depends on Cys100, which acts as the Proton donor. FMN is bound by residues Lys139, 200-202, and 224-225; these read NGD and GR.

Belongs to the Dus family. DusB subfamily. FMN serves as cofactor.

The catalysed reaction is a 5,6-dihydrouridine in tRNA + NAD(+) = a uridine in tRNA + NADH + H(+). It catalyses the reaction a 5,6-dihydrouridine in tRNA + NADP(+) = a uridine in tRNA + NADPH + H(+). Catalyzes the synthesis of 5,6-dihydrouridine (D), a modified base found in the D-loop of most tRNAs, via the reduction of the C5-C6 double bond in target uridines. The sequence is that of tRNA-dihydrouridine synthase B from Yersinia pestis.